We begin with the raw amino-acid sequence, 1461 residues long: DNA topoisomerase 2 (1461 aa).

A compositionally biased stretch (acidic residues) spans 1 to 17 (MSESESDYFTDGSEDDF). The segment at 1-61 (MSESESDYFT…TPKPTNASET (61 aa)) is disordered. Positions 41–52 (TNSTVSSSRSST) are enriched in low complexity. Residues asparagine 120, asparagine 149, 177-179 (SSN), and 190-197 (GRNGFGAK) contribute to the ATP site. Residues 382 to 389 (SKKEKGKK) are interaction with DNA. 418-420 (QTK) is an ATP binding site. One can recognise a Toprim domain in the interval 498–614 (CTLILTEGLS…GLLDIPGFLL (117 aa)). Residues glutamate 504, aspartate 583, and aspartate 585 each contribute to the Mg(2+) site. The region spanning 752 to 1226 (IPSVLDGFKP…SAKDLWNQDL (475 aa)) is the Topo IIA-type catalytic domain. Residue tyrosine 842 is the O-(5'-phospho-DNA)-tyrosine intermediate of the active site. Positions 1024–1033 (KLVSSLSLAN) are interaction with DNA. 2 disordered regions span residues 1122 to 1155 (DGKP…DVGN) and 1244 to 1461 (RESL…IVDE). A compositionally biased stretch (acidic residues) spans 1133–1153 (LTGDDADEEEETQEQEGDEDV). Over residues 1251 to 1261 (GKKKSTKRRAK) the composition is skewed to basic residues. 2 stretches are compositionally biased toward basic and acidic residues: residues 1274–1283 (VKVEPKEKKS) and 1406–1417 (DKPEPKERRTRE). The segment covering 1434 to 1461 (DSDDEDEDEEDDIVMSDGDDDDDFIVDE) has biased composition (acidic residues).

The protein belongs to the type II topoisomerase family. As to quaternary structure, homodimer. Requires Mg(2+) as cofactor. It depends on Mn(2+) as a cofactor. Ca(2+) is required as a cofactor.

The protein localises to the nucleus. It carries out the reaction ATP-dependent breakage, passage and rejoining of double-stranded DNA.. Functionally, control of topological states of DNA by transient breakage and subsequent rejoining of DNA strands. Topoisomerase II makes double-strand breaks. This is DNA topoisomerase 2 (TOP2) from Candida albicans (Yeast).